The chain runs to 311 residues: Olfactory receptor 287 (311 aa).

At 1–27 (MAWSTGQNLSTPGPFILLGFPGPRSMR) the chain is on the extracellular side. Residue asparagine 8 is glycosylated (N-linked (GlcNAc...) asparagine). The helical transmembrane segment at 28-53 (IGLFLLFLVMYLLTVVGNLAIISLVG) threads the bilayer. At 54-60 (AHRCLQT) the chain is on the cytoplasmic side. A helical transmembrane segment spans residues 61 to 82 (PMYFFLCNLSFLEIWFTTACVP). Residues 83-103 (KTLATFAPRGGVISLAGCATQ) lie on the Extracellular side of the membrane. Cysteines 100 and 192 form a disulfide. The helical transmembrane segment at 104–123 (MYFVFSLGCTEYFLLAVMAY) threads the bilayer. Residues 124-142 (DRYLAICLPLRYGGIMTPG) lie on the Cytoplasmic side of the membrane. A helical transmembrane segment spans residues 143 to 161 (LAMRLALGSWLCGFSAITV). Residues 162–199 (PATLIARLSFCGSRVINHFFCDISPWIVLSCTDTQVVE) are Extracellular-facing. The chain crosses the membrane as a helical span at residues 200 to 222 (LVSFGIAFCVILGSCGITLVSYA). Residues 223 to 239 (YIITTIIKIPSARGRHR) are Cytoplasmic-facing. Residues 240–263 (AFSTCSSHLTVVLIWYGSTIFLHV) traverse the membrane as a helical segment. Topologically, residues 264–275 (RTSVESSLDLTK) are extracellular. Residues 276–295 (AITVLNTIVTPVLNPFIYTL) form a helical membrane-spanning segment. Residues 296 to 311 (RNKDVKEALRRTVKGK) lie on the Cytoplasmic side of the membrane.

This sequence belongs to the G-protein coupled receptor 1 family. As to expression, olfactory epithelium.

It localises to the cell membrane. In terms of biological role, odorant receptor. The chain is Olfactory receptor 287 (Olr287) from Rattus norvegicus (Rat).